A 308-amino-acid chain; its full sequence is Putative mitochondrial transporter UCP3 (308 aa).

Topologically, residues 1-10 (MVGLQPSEVP) are mitochondrial intermembrane. A helical membrane pass occupies residues 11–32 (PTTVVKFLGAGTAACFADLLTF). Solcar repeat units lie at residues 11–102 (PTTV…VKQF), 111–202 (SSVA…IKEK), and 211–296 (DNFP…LKRA). Over 33-73 (PLDTAKVRLQIQGENPGAQSVQYRGVLGTILTMVRTEGPRS) the chain is Mitochondrial matrix. A helical membrane pass occupies residues 74-96 (PYSGLVAGLHRQMSFASIRIGLY). Residues 97–116 (DSVKQFYTPKGADHSSVAIR) are Mitochondrial intermembrane-facing. Residues 117–133 (ILAGCTTGAMAVTCAQP) traverse the membrane as a helical segment. At 134–179 (TDVVKVRFQAMIRLGTGGERKYRGTMDAYRTIAREEGVRGLWKGTW) the chain is on the mitochondrial matrix side. Residues 180–196 (PNITRNAIVNCAEMVTY) traverse the membrane as a helical segment. Topologically, residues 197-213 (DIIKEKLLESHLFTDNF) are mitochondrial intermembrane. Residues 214-233 (PCHFVSAFGAGFCATVVASP) form a helical membrane-spanning segment. Residues 234–267 (VDVVKTRYMNAPLGRYRSPLHCMLKMVAQEGPTA) are Mitochondrial matrix-facing. Residues 268-290 (FYKGFVPSFLRLGAWNVMMFVTY) traverse the membrane as a helical segment. The segment at 275-297 (SFLRLGAWNVMMFVTYEQLKRAL) is purine nucleotide binding. Residues 291 to 308 (EQLKRALMKVQVLRESPF) are Mitochondrial intermembrane-facing.

This sequence belongs to the mitochondrial carrier (TC 2.A.29) family. In terms of assembly, interacts with HAX1; the interaction is direct and calcium-dependent.

It localises to the mitochondrion inner membrane. Its activity is regulated as follows. Inhibited by purine nucleotides and inorganic phosphate (in vitro). Putative transmembrane transporter that plays a role in mitochondrial metabolism via an as yet unclear mechanism. Originally, this mitochondrial protein was thought to act as a proton transmembrane transporter from the mitochondrial intermembrane space into the matrix, causing proton leaks through the inner mitochondrial membrane, thereby uncoupling mitochondrial membrane potential generation from ATP synthesis. However, this function is controversial and uncoupling may not be the function, or at least not the main function, but rather a consequence of more conventional metabolite transporter activity. This Mus musculus (Mouse) protein is Putative mitochondrial transporter UCP3.